The primary structure comprises 177 residues: Large ribosomal subunit protein bL19 (177 aa).

The protein belongs to the bacterial ribosomal protein bL19 family.

Its function is as follows. This protein is located at the 30S-50S ribosomal subunit interface and may play a role in the structure and function of the aminoacyl-tRNA binding site. The sequence is that of Large ribosomal subunit protein bL19 from Rhizobium meliloti (strain 1021) (Ensifer meliloti).